The chain runs to 433 residues: Homogentisate 1,2-dioxygenase (433 aa).

Catalysis depends on His288, which acts as the Proton acceptor. Residues His331 and Glu337 each coordinate Fe cation. 2 residues coordinate homogentisate: Tyr346 and His367. His367 contributes to the Fe cation binding site.

Belongs to the homogentisate dioxygenase family. As to quaternary structure, hexamer; dimer of trimers. Requires Fe cation as cofactor.

It carries out the reaction homogentisate + O2 = 4-maleylacetoacetate + H(+). It participates in amino-acid degradation; L-phenylalanine degradation; acetoacetate and fumarate from L-phenylalanine: step 4/6. Functionally, involved in the catabolism of homogentisate (2,5-dihydroxyphenylacetate or 2,5-OH-PhAc), a central intermediate in the degradation of phenylalanine and tyrosine. Catalyzes the oxidative ring cleavage of the aromatic ring of homogentisate to yield maleylacetoacetate. The sequence is that of Homogentisate 1,2-dioxygenase from Pseudomonas putida (strain W619).